The chain runs to 630 residues: Plastin-1 (630 aa).

M1 carries the post-translational modification N-acetylmethionine. 2 EF-hand domains span residues 11–46 and 51–86; these read EELE…ASLP and KVRE…LKSK. Residues D24, D26, S28, Y30, E35, D64, N66, D68, R70, and E75 each coordinate Ca(2+). Actin-binding stretches follow at residues 108-381 and 382-626; these read TSSI…GLHK and PDNN…GKGL. Calponin-homology (CH) domains lie at 122–238, 266–377, 396–505, and 517–626; these read EEEK…KVGL, LSPE…NTYP, SKEE…RRYT, and KVND…GKGL.

As to quaternary structure, monomer. In terms of processing, phosphorylated.

The protein resides in the cytoplasm. It localises to the cell projection. It is found in the stereocilium. In terms of biological role, actin-bundling protein. In the inner ear, it is required for stereocilia formation. Mediates liquid packing of actin filaments that is necessary for stereocilia to grow to their proper dimensions. The polypeptide is Plastin-1 (PLS1) (Bos taurus (Bovine)).